Consider the following 141-residue polypeptide: Hemoglobin subunit alpha-D (141 aa).

The Globin domain occupies 1–141; sequence MLTAEDKKLI…VAAVLAEKYR (141 aa). Heme b contacts are provided by His58 and His87.

The protein belongs to the globin family. Heterotetramer of two alpha-D chains and two beta chains. In terms of tissue distribution, red blood cells.

Its function is as follows. Involved in oxygen transport from the lung to the various peripheral tissues. This is Hemoglobin subunit alpha-D (HBAD) from Apus apus (Common swift).